Consider the following 238-residue polypeptide: Polynucleotide 3'-phosphatase (238 aa).

Belongs to the DNA 3' phosphatase family.

It localises to the nucleus. The catalysed reaction is a 3'end (2'-deoxyribonucleotide 3'-phosphate)-DNA + H2O = a 3'-end 2'-deoxyribonucleotide-DNA + phosphate. Its function is as follows. Dephosphorylate DNA's 3'-phosphate termini. Has a role in the repair of breaks in single-stranded DNA. This is Polynucleotide 3'-phosphatase (TPP1) from Saccharomyces cerevisiae (strain ATCC 204508 / S288c) (Baker's yeast).